The chain runs to 424 residues: Enolase (424 aa).

Glutamine 162 serves as a coordination point for (2R)-2-phosphoglycerate. Glutamate 204 serves as the catalytic Proton donor. The Mg(2+) site is built by aspartate 241, glutamate 284, and aspartate 311. Lysine 336, arginine 365, serine 366, and lysine 387 together coordinate (2R)-2-phosphoglycerate. The active-site Proton acceptor is lysine 336.

This sequence belongs to the enolase family. Mg(2+) serves as cofactor.

Its subcellular location is the cytoplasm. The protein resides in the secreted. It localises to the cell surface. The enzyme catalyses (2R)-2-phosphoglycerate = phosphoenolpyruvate + H2O. Its pathway is carbohydrate degradation; glycolysis; pyruvate from D-glyceraldehyde 3-phosphate: step 4/5. In terms of biological role, catalyzes the reversible conversion of 2-phosphoglycerate (2-PG) into phosphoenolpyruvate (PEP). It is essential for the degradation of carbohydrates via glycolysis. In Sinorhizobium medicae (strain WSM419) (Ensifer medicae), this protein is Enolase.